We begin with the raw amino-acid sequence, 264 residues long: Acyl-[acyl-carrier-protein]--UDP-N-acetylglucosamine O-acyltransferase (264 aa).

It belongs to the transferase hexapeptide repeat family. LpxA subfamily. As to quaternary structure, homotrimer.

It is found in the cytoplasm. It carries out the reaction a (3R)-hydroxyacyl-[ACP] + UDP-N-acetyl-alpha-D-glucosamine = a UDP-3-O-[(3R)-3-hydroxyacyl]-N-acetyl-alpha-D-glucosamine + holo-[ACP]. The protein operates within glycolipid biosynthesis; lipid IV(A) biosynthesis; lipid IV(A) from (3R)-3-hydroxytetradecanoyl-[acyl-carrier-protein] and UDP-N-acetyl-alpha-D-glucosamine: step 1/6. Functionally, involved in the biosynthesis of lipid A, a phosphorylated glycolipid that anchors the lipopolysaccharide to the outer membrane of the cell. The sequence is that of Acyl-[acyl-carrier-protein]--UDP-N-acetylglucosamine O-acyltransferase from Chlorobium phaeobacteroides (strain DSM 266 / SMG 266 / 2430).